The primary structure comprises 422 residues: 26S proteasome non-ATPase regulatory subunit 11 (422 aa).

A2 is modified (N-acetylalanine). Residues S14 and S23 each carry the phosphoserine modification. The PCI domain maps to 224–392 (DWKTAYSYFY…GVLIIFDEPP (169 aa)). Residue K274 forms a Glycyl lysine isopeptide (Lys-Gly) (interchain with G-Cter in SUMO2) linkage.

This sequence belongs to the proteasome subunit S9 family. As to quaternary structure, component of the 19S proteasome regulatory particle complex. The 26S proteasome consists of a 20S core particle (CP) and two 19S regulatory subunits (RP). The regulatory particle is made of a lid composed of 9 subunits including PSMD11, a base containing 6 ATPases and few additional components.

Component of the 26S proteasome, a multiprotein complex involved in the ATP-dependent degradation of ubiquitinated proteins. This complex plays a key role in the maintenance of protein homeostasis by removing misfolded or damaged proteins, which could impair cellular functions, and by removing proteins whose functions are no longer required. Therefore, the proteasome participates in numerous cellular processes, including cell cycle progression, apoptosis, or DNA damage repair. In the complex, PSMD11 is required for proteasome assembly. Plays a key role in increased proteasome activity in embryonic stem cells (ESCs): its high expression in ESCs promotes enhanced assembly of the 26S proteasome, followed by higher proteasome activity. This Mus musculus (Mouse) protein is 26S proteasome non-ATPase regulatory subunit 11 (Psmd11).